Here is a 220-residue protein sequence, read N- to C-terminus: Kinetochore protein Spc25 (220 aa).

Positions 79 to 114 (HLTQEVEAIKLRNLAMKDQIKQQKMLNNQRKNEIME) form a coiled coil.

It belongs to the SPC25 family. As to quaternary structure, component of the Ndc80 complex, which is composed of Ndc80, Nuf2 and Spc25.

It is found in the nucleus. The protein localises to the chromosome. The protein resides in the centromere. It localises to the kinetochore. In terms of biological role, acts as a component of the essential kinetochore-associated Ndc80 complex, which is required for chromosome segregation and spindle checkpoint activity during meiosis and mitosis. Required for kinetochore integrity and the organization of stable microtubule binding sites in the outer plate of the kinetochore. Participates in SAC signaling that responds specifically to disruptions in spindle microtubule dynamics. The NDC80 complex synergistically enhances the affinity of the SKA1 complex for microtubules and may allow the NDC80 complex to track depolymerizing microtubules. In Drosophila orena (Fruit fly), this protein is Kinetochore protein Spc25.